The following is a 446-amino-acid chain: MTRRAVSRKRRAAPGTGPGEQSDWDHSAHKRKRLPPEKKSLVFYLKSRELKPHNDSSYLRLLRGHAACTLPGILSEREFHLGTLNKVFASQWLNHRQVVCGTKCNTLFVVDVQTGQITKIPILKDREPLSGSHQSCGIHAIEINPSRTLLATGGDNPNSIAVYRLPTLDPVCVGDGGHNDWIFSIAWISDTMAVSGSRDGSMALWEMTEEILSKSDFQHGLSRVPVYAHISHKALKDIPKESSNPVNCKVRALAFNSKNKELGAVSLDGFFHLWKAELTLAKLLSTKLPYCRENVCLAYGLEWSLYAVGSQAHVSFLDPRQPPQCAKSVYCREQGSGIRSVSFYEHIVTVGTGQGALLFYDIRAQRFLEDSTGSCRNSKYKGDLLKLSTGKGWLNHNEMWMNYFSDIDCCPNAVYTHCYDSSGTKLFVAGGPLPTGLHGNYAGLWS.

Residues 1–12 (MTRRAVSRKRRA) show a composition bias toward basic residues. The disordered stretch occupies residues 1–33 (MTRRAVSRKRRAAPGTGPGEQSDWDHSAHKRKR). WD repeat units lie at residues 132–173 (SHQS…PVCV), 177–215 (GHND…LSKS), 245–284 (PVNC…AKLL), and 333–370 (EQGS…FLED).

This sequence belongs to the WD repeat DCAF12 family. As to quaternary structure, component of the DCX(DCAF12) E3 ubiquitin ligase complex, at least composed of cul4 (cul4a or cul4b), ddb1, dcaf12 and rbx1.

It is found in the cytoplasm. The protein resides in the cytoskeleton. Its subcellular location is the microtubule organizing center. The protein localises to the centrosome. It localises to the nucleus. It participates in protein modification; protein ubiquitination. Its function is as follows. Substrate-recognition component of a DCX (DDB1-CUL4-X-box) E3 ubiquitin-protein ligase complex of the DesCEND (destruction via C-end degrons) pathway, which recognizes a C-degron located at the extreme C terminus of target proteins, leading to their ubiquitination and degradation. The C-degron recognized by the DesCEND pathway is usually a motif of less than ten residues and can be present in full-length proteins, truncated proteins or proteolytically cleaved forms. The DCX(DCAF12) complex specifically recognizes proteins with a diglutamate (Glu-Glu) at the C-terminus leading to their ubiquitination and degradation. Also directly recognizes the C-terminal glutamate-leucine (Glu-Leu) degron as an alternative degron in proteins leading to their ubiquitination and degradation. The sequence is that of DDB1- and CUL4-associated factor 12 from Xenopus tropicalis (Western clawed frog).